A 161-amino-acid polypeptide reads, in one-letter code: Peptidyl-prolyl cis-trans isomerase-like 3 (161 aa).

The PPIase cyclophilin-type domain maps to 1–154 (MAVTLHTDVG…NDVHIKDITI (154 aa)).

This sequence belongs to the cyclophilin-type PPIase family. PPIL3 subfamily.

It catalyses the reaction [protein]-peptidylproline (omega=180) = [protein]-peptidylproline (omega=0). Functionally, PPIases accelerate the folding of proteins. It catalyzes the cis-trans isomerization of proline imidic peptide bonds in oligopeptides. In Gallus gallus (Chicken), this protein is Peptidyl-prolyl cis-trans isomerase-like 3 (PPIL3).